A 286-amino-acid chain; its full sequence is uncharacterized protein (286 aa).

His-183 serves as the catalytic Proton donor. Cys-277 functions as the Nucleophile in the catalytic mechanism.

It belongs to the DDAH family.

This is an uncharacterized protein from Bacillus subtilis (strain 168).